We begin with the raw amino-acid sequence, 284 residues long: Tropomyosin beta chain (284 aa).

At methionine 1 the chain carries N-acetylmethionine. Positions 1–78 (MDAIKKKMQM…EKLEQAEKKA (78 aa)) are disordered. Residues 1 to 284 (MDAIKKKMQM…DNALNDITSL (284 aa)) adopt a coiled-coil conformation. 2 stretches are compositionally biased toward basic and acidic residues: residues 12–40 (KLDK…KQLE) and 51–78 (KGTE…EKKA). The residue at position 53 (threonine 53) is a Phosphothreonine. Serine 61 is modified (phosphoserine; by PIK3CG). Position 79 is a phosphothreonine (threonine 79). A Phosphoserine modification is found at serine 87. Threonine 108 is modified (phosphothreonine). Positions 117–136 (EKAADESERGMKVIENRAMK) are disordered. A phosphoserine mark is found at serine 158, serine 206, and serine 215. Position 252 is a phosphothreonine (threonine 252). Phosphotyrosine is present on tyrosine 261. Serine 271 carries the post-translational modification Phosphoserine. Threonine 282 carries the post-translational modification Phosphothreonine. The residue at position 283 (serine 283) is a Phosphoserine.

Belongs to the tropomyosin family. As to quaternary structure, homodimer. Heterodimer of an alpha (TPM1, TPM3 or TPM4) and a beta (TPM2) chain. In terms of processing, phosphorylated on Ser-61 by PIK3CG. Phosphorylation on Ser-61 is required for ADRB2 internalization.

The protein resides in the cytoplasm. It localises to the cytoskeleton. In terms of biological role, binds to actin filaments in muscle and non-muscle cells. Plays a central role, in association with the troponin complex, in the calcium dependent regulation of vertebrate striated muscle contraction. Smooth muscle contraction is regulated by interaction with caldesmon. In non-muscle cells is implicated in stabilizing cytoskeleton actin filaments. The non-muscle isoform may have a role in agonist-mediated receptor internalization. This chain is Tropomyosin beta chain (Tpm2), found in Mus musculus (Mouse).